The following is a 704-amino-acid chain: Ion-translocating oxidoreductase complex subunit C (704 aa).

4Fe-4S ferredoxin-type domains are found at residues 368–397 and 407–436; these read MGAP…QQLY and KATA…VQYF. [4Fe-4S] cluster is bound by residues Cys-377, Cys-380, Cys-383, Cys-387, Cys-416, Cys-419, Cys-422, and Cys-426. Residues 534–682 form a disordered region; that stretch reads QARAKQAAHP…AEPADPRKAA (149 aa).

The protein belongs to the 4Fe4S bacterial-type ferredoxin family. RnfC subfamily. The complex is composed of six subunits: RsxA, RsxB, RsxC, RsxD, RsxE and RsxG. [4Fe-4S] cluster serves as cofactor.

Its subcellular location is the cell inner membrane. Functionally, part of a membrane-bound complex that couples electron transfer with translocation of ions across the membrane. Required to maintain the reduced state of SoxR. The protein is Ion-translocating oxidoreductase complex subunit C of Salmonella enteritidis PT4 (strain P125109).